Consider the following 436-residue polypeptide: Methylenetetrahydrofolate--tRNA-(uracil-5-)-methyltransferase TrmFO (436 aa).

9–14 is an FAD binding site; it reads GAGLAG.

It belongs to the MnmG family. TrmFO subfamily. Requires FAD as cofactor.

The protein resides in the cytoplasm. The enzyme catalyses uridine(54) in tRNA + (6R)-5,10-methylene-5,6,7,8-tetrahydrofolate + NADH + H(+) = 5-methyluridine(54) in tRNA + (6S)-5,6,7,8-tetrahydrofolate + NAD(+). It catalyses the reaction uridine(54) in tRNA + (6R)-5,10-methylene-5,6,7,8-tetrahydrofolate + NADPH + H(+) = 5-methyluridine(54) in tRNA + (6S)-5,6,7,8-tetrahydrofolate + NADP(+). Catalyzes the folate-dependent formation of 5-methyl-uridine at position 54 (M-5-U54) in all tRNAs. This chain is Methylenetetrahydrofolate--tRNA-(uracil-5-)-methyltransferase TrmFO, found in Ligilactobacillus salivarius (strain UCC118) (Lactobacillus salivarius).